Consider the following 168-residue polypeptide: Histone doublet miniH2B-H2A (168 aa).

Its subcellular location is the host nucleus. The protein resides in the host cytoplasm. The protein localises to the virion. Histone-like protein that is recruited to viral factories during viral replication and participates in viral DNA packaging and virion production probably by forming unstable nucleosome-like particles. May compact the viral DNA. The sequence is that of Histone doublet miniH2B-H2A from Melbournevirus (MelV).